The primary structure comprises 136 residues: Transcription antitermination protein NusB (136 aa).

This sequence belongs to the NusB family.

In terms of biological role, involved in transcription antitermination. Required for transcription of ribosomal RNA (rRNA) genes. Binds specifically to the boxA antiterminator sequence of the ribosomal RNA (rrn) operons. This Arthrobacter sp. (strain FB24) protein is Transcription antitermination protein NusB.